We begin with the raw amino-acid sequence, 828 residues long: MHFAKLDDSPMFRQQMQSMEESAELLRLRCLRFYKGCRKYTEGLGEGYDADIGFVNALESFGGGHNDPVCVAFGGPVMTKFTIALREIGTYKEVLRSQVEHMLSDRLLQFVNGDVHEVKEARKRFDKATITYDQAREKYLSLRKSTRLDVAATIEEDLHSARTTFEQARFHLVSALSNAESKKRFEFLEAVSGTMDAHLRFFKQGYELLHQMEPFINQVLAYAHQSRECANYEMASLNERMQEYQRQVDRETRNSCVSPTGDGMRHNSRNSQKVIEAVMQSAAKGKVQTIRQGYLSKRSSNLRGDWKRRFFILDSRGMLYYYRKPWNWSSGNGSRSVVHRNMASENSPGLLSRWLSSHYHGGVHDEKPVARHTVNLLTSTIKVDADQTDLRFCFRIISPTKVYTLQAENAQDQMDWIEKITGVIASLLSFQTPERAIMRLSTVDGGDTFSASDSGSLADPYDIEQAESGESTVEHPMTGGNRSRFSGCLQQHDMVKTEKPIDVLTRVLGNERCADCGAPEPDWASLNLGVLICIECSGIHRNLGVHISKVRSLTLDVKVWEPSVLTLFQSLGNVYVNSVWEELLNSESRTSSASRSSGTPKSDRPRKLLVRKPGFNDPISVKELFIHAKYSERIFVRKAIDSQHFQAVFQEIWENVRANDKKSVYRHIVCSEADVNALRGQASYTVSLPLSKMMQMEETLEAKFKSIEEEFQENPAGYSNSRGDGESMVREETSNDCSLLHLACLSADIGMVELLLQYGAKINATDSKGRTPLHHCIISRRYAIARLLLMRGGDPNAVDKDSNIPVKYASQTDLNDSELIALLTDSKR.

The BAR domain occupies 1-225; that stretch reads MHFAKLDDSP…INQVLAYAHQ (225 aa). Residues 225 to 255 adopt a coiled-coil conformation; that stretch reads QSRECANYEMASLNERMQEYQRQVDRETRNS. The interval 247-268 is disordered; sequence QVDRETRNSCVSPTGDGMRHNS. The region spanning 288-425 is the PH domain; that stretch reads QTIRQGYLSK…WIEKITGVIA (138 aa). Serine 441 bears the Phosphoserine mark. Residues 498 to 643 form the Arf-GAP domain; the sequence is EKPIDVLTRV…IFVRKAIDSQ (146 aa). The C4-type zinc finger occupies 513–536; sequence CADCGAPEPDWASLNLGVLICIEC. Residues 590 to 600 show a composition bias toward low complexity; it reads TSSASRSSGTP. A disordered region spans residues 590–611; sequence TSSASRSSGTPKSDRPRKLLVR. ANK repeat units lie at residues 735–764 and 768–797; these read NDCS…KINA and KGRT…DPNA.

Expressed in roots, but not in hypocotyls or cotyledons. Low levels detected in leaf and shoot apical meristems and in siliques.

It is found in the endosome. Probable GTPase-activating protein. Regulator of membrane trafficking. Required for maintaining a straight growth of root hairs. In Arabidopsis thaliana (Mouse-ear cress), this protein is ADP-ribosylation factor GTPase-activating protein AGD1 (AGD1).